Consider the following 131-residue polypeptide: Large ribosomal subunit protein bL17 (131 aa).

Belongs to the bacterial ribosomal protein bL17 family. Part of the 50S ribosomal subunit. Contacts protein L32.

The chain is Large ribosomal subunit protein bL17 from Sodalis glossinidius (strain morsitans).